A 557-amino-acid chain; its full sequence is Potassium-transporting ATPase potassium-binding subunit (557 aa).

12 consecutive transmembrane segments (helical) span residues 5-25 (GFLL…PLGS), 63-83 (LSAI…MLLG), 132-152 (GLTV…FAFI), 170-190 (LLRI…LFFI), 253-273 (FVQM…FGEV), 283-303 (LLWA…WAEV), 329-349 (VLVS…AVIA), 356-376 (ALGG…FGGV), 379-399 (GLYG…LMIG), 416-436 (LTAL…ALAM), 484-504 (LLAF…MAIA), and 526-546 (LFVG…FIPA).

The protein belongs to the KdpA family. As to quaternary structure, the system is composed of three essential subunits: KdpA, KdpB and KdpC.

It is found in the cell inner membrane. Functionally, part of the high-affinity ATP-driven potassium transport (or Kdp) system, which catalyzes the hydrolysis of ATP coupled with the electrogenic transport of potassium into the cytoplasm. This subunit binds the periplasmic potassium ions and delivers the ions to the membrane domain of KdpB through an intramembrane tunnel. The polypeptide is Potassium-transporting ATPase potassium-binding subunit (Escherichia coli (strain SMS-3-5 / SECEC)).